The chain runs to 160 residues: RxLR effector protein PexRD44 (160 aa).

Positions 1–21 are cleaved as a signal peptide; the sequence is MRLLLWVLISMLSIALSSCAA. The RxLR-dEER motif lies at 54–76; the sequence is RFLRGESSKIVNLKQEEGVFEER.

The protein belongs to the RxLR effector family.

The protein resides in the secreted. It localises to the host cell membrane. The protein localises to the host nucleus. Its subcellular location is the host nucleolus. Functionally, effector that is involved in host plant infection. Contributes to virulence during the early infection stage, by inhibiting plant defense responses induced by both PAMP-triggered immunity (PTI) and effector-triggered immunity (ETI). The sequence is that of RxLR effector protein PexRD44 from Phytophthora infestans (strain T30-4) (Potato late blight agent).